We begin with the raw amino-acid sequence, 430 residues long: Adenylosuccinate synthetase (430 aa).

Residues 12–18 and 40–42 each bind GTP; these read GDEGKGK and GHT. The active-site Proton acceptor is aspartate 13. Residues aspartate 13 and glycine 40 each coordinate Mg(2+). IMP is bound by residues 13–16, 38–41, threonine 128, arginine 142, glutamine 223, threonine 238, and arginine 302; these read DEGK and NAGH. Catalysis depends on histidine 41, which acts as the Proton donor. 298 to 304 lines the substrate pocket; the sequence is TTTGRPR. GTP contacts are provided by residues arginine 304, 330 to 332, and 412 to 414; these read SID and SVG.

The protein belongs to the adenylosuccinate synthetase family. In terms of assembly, homodimer. Mg(2+) serves as cofactor.

The protein localises to the cytoplasm. The catalysed reaction is IMP + L-aspartate + GTP = N(6)-(1,2-dicarboxyethyl)-AMP + GDP + phosphate + 2 H(+). The protein operates within purine metabolism; AMP biosynthesis via de novo pathway; AMP from IMP: step 1/2. In terms of biological role, plays an important role in the de novo pathway of purine nucleotide biosynthesis. Catalyzes the first committed step in the biosynthesis of AMP from IMP. The chain is Adenylosuccinate synthetase from Streptococcus pyogenes serotype M6 (strain ATCC BAA-946 / MGAS10394).